The chain runs to 362 residues: Peptide chain release factor 1 (362 aa).

Gln-238 bears the N5-methylglutamine mark.

Belongs to the prokaryotic/mitochondrial release factor family. In terms of processing, methylated by PrmC. Methylation increases the termination efficiency of RF1.

It localises to the cytoplasm. Functionally, peptide chain release factor 1 directs the termination of translation in response to the peptide chain termination codons UAG and UAA. This is Peptide chain release factor 1 from Psychrobacter arcticus (strain DSM 17307 / VKM B-2377 / 273-4).